The chain runs to 601 residues: MATPEPAESDAEWEQLEPGQRNLYKDTKLETCSNPASMGNQDPKQGLVSKLDGEEERWSSVRANKNSSSSLHRLKKTGTSAKVQQDGAQTEGKQKFQRKLTSEVTFRKKSSNSKKSSECTLLEKKNVHSKHDPSEKRLHKSNLYGKNLNQNLDLPSQIKISAKKKPDTANEYRKSLSHSASDVNRDEISTRKKCDKSPNNKLFGKGDKNQTGKKCEKVCRHTASHTKEDKIHTGEKRKSPCRSPSKSDKAPGSGKPYECNQCGKVLSHKQGLLDHQRTHAGEEPYECYECGIAFSQKSHLVVHQKTPTGEKAPYECVQCGKAHGHKHALTDHLRISHTGEKPYKCNECGKTFRHSSNLMQHIRSHTGEKPYECKECGKSFRYNSSFTEHVRTHTGEIPYECNECGKAFKYGSSLTKHMRIHTGEKPFECTECGKTFSKKSHLVIHQRTHTKEKPYKCKECGKAFGHSSSLTYHMRTHTGDCPFECNKCGKAFKQIEGLTQHQRVHTGEKPYECVECGKAFSQKSHLIVHQRTHTGEKPFECYECGKAFNAKSQLVIHQRSHTGEKPYKPYECVECGKAFKQNASLTRHMKTHSEEQSQEED.

The KRAB domain maps to 1–70; it reads MATPEPAESD…VRANKNSSSS (70 aa). T3 bears the Phosphothreonine mark. S9 carries the post-translational modification Phosphoserine. The segment covering 30–43 has biased composition (polar residues); that stretch reads ETCSNPASMGNQDP. The segment at 30–254 is disordered; the sequence is ETCSNPASMG…SKSDKAPGSG (225 aa). Low complexity predominate over residues 60 to 70; sequence SVRANKNSSSS. Over residues 77–88 the composition is skewed to polar residues; the sequence is TGTSAKVQQDGA. Basic and acidic residues-rich tracts occupy residues 115–136, 164–174, and 183–238; these read KSSECTLLEKKNVHSKHDPSEK, KKPDTANEYRK, and VNRD…EKRK. The C2H2-type 1 zinc finger occupies 257–279; sequence YECNQCGKVLSHKQGLLDHQRTH. The C2H2-type 2; atypical zinc finger occupies 285–303; sequence YECYECGIAFSQKSHLVVH. 10 consecutive C2H2-type zinc fingers follow at residues 314 to 337, 343 to 365, 371 to 393, 399 to 421, 427 to 449, 455 to 477, 483 to 505, 511 to 533, 539 to 561, and 570 to 592; these read YECVQCGKAHGHKHALTDHLRISH, YKCNECGKTFRHSSNLMQHIRSH, YECKECGKSFRYNSSFTEHVRTH, YECNECGKAFKYGSSLTKHMRIH, FECTECGKTFSKKSHLVIHQRTH, YKCKECGKAFGHSSSLTYHMRTH, FECNKCGKAFKQIEGLTQHQRVH, YECVECGKAFSQKSHLIVHQRTH, FECYECGKAFNAKSQLVIHQRSH, and YECVECGKAFKQNASLTRHMKTH.

Belongs to the krueppel C2H2-type zinc-finger protein family. Expressed in testes, brain, kidney, spleen, thymus, lung, and at low levels in liver.

It localises to the nucleus. Functionally, may be involved in transcriptional regulation. The sequence is that of Zinc finger protein 37 (Zfp37) from Rattus norvegicus (Rat).